The chain runs to 244 residues: Na(+)-translocating NADH-quinone reductase subunit E (244 aa).

Helical transmembrane passes span 11–31 (LLGI…TFLG), 50–70 (MSVA…HYFI), 90–110 (FLEL…LELL), 123–143 (GIFL…LFGI), 153–173 (VVFS…FATI), and 191–211 (ISFI…GIDI).

This sequence belongs to the NqrDE/RnfAE family. As to quaternary structure, composed of six subunits; NqrA, NqrB, NqrC, NqrD, NqrE and NqrF.

The protein localises to the cell inner membrane. It carries out the reaction a ubiquinone + n Na(+)(in) + NADH + H(+) = a ubiquinol + n Na(+)(out) + NAD(+). Functionally, NQR complex catalyzes the reduction of ubiquinone-1 to ubiquinol by two successive reactions, coupled with the transport of Na(+) ions from the cytoplasm to the periplasm. NqrA to NqrE are probably involved in the second step, the conversion of ubisemiquinone to ubiquinol. The sequence is that of Na(+)-translocating NADH-quinone reductase subunit E from Chlamydia trachomatis serovar L2 (strain ATCC VR-902B / DSM 19102 / 434/Bu).